Here is a 156-residue protein sequence, read N- to C-terminus: UPF0251 protein Sfum_2819 (156 aa).

The protein belongs to the UPF0251 family.

This is UPF0251 protein Sfum_2819 from Syntrophobacter fumaroxidans (strain DSM 10017 / MPOB).